The following is a 599-amino-acid chain: Elongation factor 4 (599 aa).

In terms of domain architecture, tr-type G spans 2 to 184; sequence KNIRNFSIIA…RLVRDIPPPE (183 aa). Residues 14-19 and 131-134 each bind GTP; these read DHGKST and NKID.

Belongs to the TRAFAC class translation factor GTPase superfamily. Classic translation factor GTPase family. LepA subfamily.

Its subcellular location is the cell inner membrane. It carries out the reaction GTP + H2O = GDP + phosphate + H(+). In terms of biological role, required for accurate and efficient protein synthesis under certain stress conditions. May act as a fidelity factor of the translation reaction, by catalyzing a one-codon backward translocation of tRNAs on improperly translocated ribosomes. Back-translocation proceeds from a post-translocation (POST) complex to a pre-translocation (PRE) complex, thus giving elongation factor G a second chance to translocate the tRNAs correctly. Binds to ribosomes in a GTP-dependent manner. This Escherichia coli (strain SE11) protein is Elongation factor 4.